Consider the following 268-residue polypeptide: 3-methyl-2-oxobutanoate hydroxymethyltransferase (268 aa).

Positions 46 and 85 each coordinate Mg(2+). 3-methyl-2-oxobutanoate contacts are provided by residues 46–47 (DS), aspartate 85, and lysine 114. Glutamate 116 is a binding site for Mg(2+). Glutamate 183 acts as the Proton acceptor in catalysis.

The protein belongs to the PanB family. As to quaternary structure, homodecamer; pentamer of dimers. The cofactor is Mg(2+).

It is found in the cytoplasm. It catalyses the reaction 3-methyl-2-oxobutanoate + (6R)-5,10-methylene-5,6,7,8-tetrahydrofolate + H2O = 2-dehydropantoate + (6S)-5,6,7,8-tetrahydrofolate. It functions in the pathway cofactor biosynthesis; coenzyme A biosynthesis. Catalyzes the reversible reaction in which hydroxymethyl group from 5,10-methylenetetrahydrofolate is transferred onto alpha-ketoisovalerate to form ketopantoate. The sequence is that of 3-methyl-2-oxobutanoate hydroxymethyltransferase from Sulfolobus acidocaldarius (strain ATCC 33909 / DSM 639 / JCM 8929 / NBRC 15157 / NCIMB 11770).